Consider the following 298-residue polypeptide: Acetaldehyde dehydrogenase (298 aa).

6-9 (SGNI) lines the NAD(+) pocket. Cysteine 121 functions as the Acyl-thioester intermediate in the catalytic mechanism. NAD(+) is bound by residues 152–160 (SAGPGTRAN) and asparagine 271.

Belongs to the acetaldehyde dehydrogenase family.

It catalyses the reaction acetaldehyde + NAD(+) + CoA = acetyl-CoA + NADH + H(+). In Mycobacterium avium (strain 104), this protein is Acetaldehyde dehydrogenase.